Consider the following 271-residue polypeptide: Elongation factor Ts (271 aa).

Positions 76-79 are involved in Mg(2+) ion dislocation from EF-Tu; the sequence is TDFV.

Belongs to the EF-Ts family.

It is found in the cytoplasm. Associates with the EF-Tu.GDP complex and induces the exchange of GDP to GTP. It remains bound to the aminoacyl-tRNA.EF-Tu.GTP complex up to the GTP hydrolysis stage on the ribosome. This Mycobacterium tuberculosis (strain ATCC 25177 / H37Ra) protein is Elongation factor Ts.